The chain runs to 234 residues: Hydrolase in agr operon (234 aa).

The CN hydrolase domain maps to 1–212 (ILYNKDTDVV…EKELTVTIDI (212 aa)). The Proton acceptor role is filled by E14. The active-site Proton donor is K83. The Nucleophile role is filled by C119.

This sequence belongs to the carbon-nitrogen hydrolase superfamily. NIT1/NIT2 family.

This chain is Hydrolase in agr operon, found in Staphylococcus lugdunensis.